A 121-amino-acid polypeptide reads, in one-letter code: UPF0102 protein AAur_2443 (121 aa).

It belongs to the UPF0102 family.

The sequence is that of UPF0102 protein AAur_2443 from Paenarthrobacter aurescens (strain TC1).